The chain runs to 336 residues: Glucokinase (336 aa).

12–17 (ADIGGT) serves as a coordination point for ATP.

It belongs to the bacterial glucokinase family.

It is found in the cytoplasm. It carries out the reaction D-glucose + ATP = D-glucose 6-phosphate + ADP + H(+). In Helicobacter pylori (strain P12), this protein is Glucokinase.